The chain runs to 158 residues: Transcriptional repressor NrdR (158 aa).

Residues 3–34 (CPSCQNTDSRVLESRAADGGRSVRRRRECLNC) fold into a zinc finger. In terms of domain architecture, ATP-cone spans 49–139 (ITVIKRDGCR…VYRQFRGIDD (91 aa)).

This sequence belongs to the NrdR family. The cofactor is Zn(2+).

Functionally, negatively regulates transcription of bacterial ribonucleotide reductase nrd genes and operons by binding to NrdR-boxes. This is Transcriptional repressor NrdR from Synechococcus sp. (strain CC9902).